The chain runs to 118 residues: Holo-[acyl-carrier-protein] synthase (118 aa).

Mg(2+) contacts are provided by aspartate 9 and glutamate 52.

Belongs to the P-Pant transferase superfamily. AcpS family. It depends on Mg(2+) as a cofactor.

The protein localises to the cytoplasm. It carries out the reaction apo-[ACP] + CoA = holo-[ACP] + adenosine 3',5'-bisphosphate + H(+). In terms of biological role, transfers the 4'-phosphopantetheine moiety from coenzyme A to a Ser of acyl-carrier-protein. This chain is Holo-[acyl-carrier-protein] synthase, found in Frankia alni (strain DSM 45986 / CECT 9034 / ACN14a).